The primary structure comprises 154 residues: Lipoprotein signal peptidase (154 aa).

The next 2 membrane-spanning stretches (helical) occupy residues 57-77 and 86-103; these read LVLS…MIKY and ISLS…YDRV. Active-site residues include Asp110 and Asp129. The helical transmembrane segment at 124-144 threads the bilayer; the sequence is VFNVADICVVVGTIMIAIFIV.

This sequence belongs to the peptidase A8 family.

The protein localises to the cell membrane. The catalysed reaction is Release of signal peptides from bacterial membrane prolipoproteins. Hydrolyzes -Xaa-Yaa-Zaa-|-(S,diacylglyceryl)Cys-, in which Xaa is hydrophobic (preferably Leu), and Yaa (Ala or Ser) and Zaa (Gly or Ala) have small, neutral side chains.. It participates in protein modification; lipoprotein biosynthesis (signal peptide cleavage). This protein specifically catalyzes the removal of signal peptides from prolipoproteins. This chain is Lipoprotein signal peptidase, found in Clostridium acetobutylicum (strain ATCC 824 / DSM 792 / JCM 1419 / IAM 19013 / LMG 5710 / NBRC 13948 / NRRL B-527 / VKM B-1787 / 2291 / W).